The chain runs to 398 residues: 1-deoxy-D-xylulose 5-phosphate reductoisomerase (398 aa).

NADPH contacts are provided by Thr11, Gly12, Ser13, Ile14, Arg38, Asn39, and Asn125. 1-deoxy-D-xylulose 5-phosphate is bound at residue Lys126. Residue Glu127 coordinates NADPH. Asp151 lines the Mn(2+) pocket. 4 residues coordinate 1-deoxy-D-xylulose 5-phosphate: Ser152, Glu153, Ser179, and His202. Glu153 provides a ligand contact to Mn(2+). NADPH is bound at residue Gly208. Ser215, Asn220, Lys221, and Glu224 together coordinate 1-deoxy-D-xylulose 5-phosphate. Residue Glu224 participates in Mn(2+) binding.

The protein belongs to the DXR family. Mg(2+) is required as a cofactor. It depends on Mn(2+) as a cofactor.

The enzyme catalyses 2-C-methyl-D-erythritol 4-phosphate + NADP(+) = 1-deoxy-D-xylulose 5-phosphate + NADPH + H(+). It functions in the pathway isoprenoid biosynthesis; isopentenyl diphosphate biosynthesis via DXP pathway; isopentenyl diphosphate from 1-deoxy-D-xylulose 5-phosphate: step 1/6. In terms of biological role, catalyzes the NADPH-dependent rearrangement and reduction of 1-deoxy-D-xylulose-5-phosphate (DXP) to 2-C-methyl-D-erythritol 4-phosphate (MEP). The chain is 1-deoxy-D-xylulose 5-phosphate reductoisomerase from Burkholderia multivorans (strain ATCC 17616 / 249).